The primary structure comprises 100 residues: Small ribosomal subunit protein uS14c (100 aa).

Belongs to the universal ribosomal protein uS14 family. In terms of assembly, part of the 30S ribosomal subunit.

It localises to the plastid. The protein resides in the chloroplast. Functionally, binds 16S rRNA, required for the assembly of 30S particles. This chain is Small ribosomal subunit protein uS14c, found in Calycanthus floridus var. glaucus (Eastern sweetshrub).